The primary structure comprises 258 residues: Cruciform cutting endonuclease 1, mitochondrial (258 aa).

Residues 1–35 (MATVKLSFLQHICKLTGLSRSGRKDELLRRIVDSP) form the SAP domain. Mg(2+) contacts are provided by D46 and D230.

Homodimer.

The protein localises to the mitochondrion. It catalyses the reaction Endonucleolytic cleavage at a junction such as a reciprocal single-stranded crossover between two homologous DNA duplexes (Holliday junction).. Its function is as follows. Capable of resolving Holliday junctions. Specific for 4-way junctions. Seems to be important for the maintenance of mitochondrial DNA. Cleaves fixed junctions at the point of strand exchange. Cleaves after 5'-CT-3' and 5'-TT-3' sequences. This Schizosaccharomyces pombe (strain 972 / ATCC 24843) (Fission yeast) protein is Cruciform cutting endonuclease 1, mitochondrial (cce1).